The primary structure comprises 424 residues: CinA-like protein (424 aa).

It belongs to the CinA family.

The sequence is that of CinA-like protein from Nostoc sp. (strain PCC 7120 / SAG 25.82 / UTEX 2576).